Here is a 476-residue protein sequence, read N- to C-terminus: Probable cytosolic Fe-S cluster assembly factor GF22738 (476 aa).

Positions 23, 68, 71, 74, 187, 243, 395, and 399 each coordinate [4Fe-4S] cluster.

The protein belongs to the NARF family.

Component of the cytosolic iron-sulfur (Fe/S) protein assembly machinery. Required for maturation of extramitochondrial Fe/S proteins. The chain is Probable cytosolic Fe-S cluster assembly factor GF22738 from Drosophila ananassae (Fruit fly).